Here is a 635-residue protein sequence, read N- to C-terminus: Threonine--tRNA ligase (635 aa).

Residues 1–61 (MIKITLKDGK…HKDSSLEILT (61 aa)) enclose the TGS domain. The catalytic stretch occupies residues 242 to 532 (DHRKLGKELD…LIEQYAGAFP (291 aa)). Zn(2+) is bound by residues Cys-333, His-384, and His-509.

Belongs to the class-II aminoacyl-tRNA synthetase family. As to quaternary structure, homodimer. Zn(2+) serves as cofactor.

It is found in the cytoplasm. It catalyses the reaction tRNA(Thr) + L-threonine + ATP = L-threonyl-tRNA(Thr) + AMP + diphosphate + H(+). Functionally, catalyzes the attachment of threonine to tRNA(Thr) in a two-step reaction: L-threonine is first activated by ATP to form Thr-AMP and then transferred to the acceptor end of tRNA(Thr). Also edits incorrectly charged L-seryl-tRNA(Thr). This Clostridium botulinum (strain Kyoto / Type A2) protein is Threonine--tRNA ligase.